We begin with the raw amino-acid sequence, 309 residues long: Ketosamine-3-kinase (309 aa).

Serine 20 is subject to Phosphoserine. Position 89 to 91 (89 to 91) interacts with ATP; the sequence is EHL. Aspartate 217 functions as the Proton acceptor in the catalytic mechanism.

It belongs to the fructosamine kinase family.

It carries out the reaction N(6)-D-ribulosyl-L-lysyl-[protein] + ATP = N(6)-(3-O-phospho-D-ribulosyl)-L-lysyl-[protein] + ADP + H(+). It catalyses the reaction N(6)-(D-psicosyl)-L-lysyl-[protein] + ATP = N(6)-(3-O-phospho-D-psicosyl)-L-lysyl-[protein] + ADP + H(+). Its function is as follows. Ketosamine-3-kinase involved in protein deglycation by mediating phosphorylation of ribuloselysine and psicoselysine on glycated proteins, to generate ribuloselysine-3 phosphate and psicoselysine-3 phosphate, respectively. Ribuloselysine-3 phosphate and psicoselysine-3 phosphate adducts are unstable and decompose under physiological conditions. Not able to phosphorylate fructoselysine. The protein is Ketosamine-3-kinase of Mus musculus (Mouse).